A 279-amino-acid chain; its full sequence is Probable endonuclease 4 (279 aa).

Residues His-74, His-112, Glu-147, Asp-180, His-183, His-214, Asp-227, His-229, and Glu-259 each coordinate Zn(2+).

It belongs to the AP endonuclease 2 family. It depends on Zn(2+) as a cofactor.

It carries out the reaction Endonucleolytic cleavage to 5'-phosphooligonucleotide end-products.. Functionally, endonuclease IV plays a role in DNA repair. It cleaves phosphodiester bonds at apurinic or apyrimidinic (AP) sites, generating a 3'-hydroxyl group and a 5'-terminal sugar phosphate. The sequence is that of Probable endonuclease 4 from Mycoplasma mobile (strain ATCC 43663 / 163K / NCTC 11711) (Mesomycoplasma mobile).